A 188-amino-acid polypeptide reads, in one-letter code: Probable chorismate pyruvate-lyase (188 aa).

R77, L115, and E174 together coordinate substrate.

This sequence belongs to the UbiC family.

The protein resides in the cytoplasm. It catalyses the reaction chorismate = 4-hydroxybenzoate + pyruvate. Its pathway is cofactor biosynthesis; ubiquinone biosynthesis. Removes the pyruvyl group from chorismate, with concomitant aromatization of the ring, to provide 4-hydroxybenzoate (4HB) for the ubiquinone pathway. This is Probable chorismate pyruvate-lyase from Shewanella loihica (strain ATCC BAA-1088 / PV-4).